The sequence spans 495 residues: Major facilitator-type transporter hxnP (495 aa).

The segment at 1–24 is disordered; it reads MGATATDIEKVPSAGTPDEPKAGE. 5 helical membrane passes run 36 to 55, 84 to 104, 123 to 143, 145 to 165, and 177 to 197; these read SFVR…MYFF, LLIL…NLLI, VWGI…LLAI, IILG…FTLF, and VLQS…FGLF. N200 carries N-linked (GlcNAc...) asparagine glycosylation. A run of 5 helical transmembrane segments spans residues 209–229, 282–302, 314–334, 341–361, and 368–388; these read WLFI…FWWL, VITF…PIIV, LWTV…AKSS, SLHI…LASI, and GVSY…TCLV. N395 carries N-linked (GlcNAc...) asparagine glycosylation. A run of 2 helical transmembrane segments spans residues 404–424 and 436–456; these read ANTG…AATF and LVAT…MGTW.

This sequence belongs to the major facilitator superfamily.

It is found in the cell membrane. Functionally, major facilitator-type transporter, part of the hnx cluster involved in the purine degradation. The nicotinate hydroxylase hnxS accepts nicotinate as a substrate and catalyzes the first step of nicotinate catabolism. The major facilitator-type transporters hxnP and hxnZ are probably involved in the uptake of nicotinate-derived metabolites, and the oxidoreductases hxnT and hxnY in the further metabolism of 6-OH nicotinic acid. The chain is Major facilitator-type transporter hxnP from Emericella nidulans (strain FGSC A4 / ATCC 38163 / CBS 112.46 / NRRL 194 / M139) (Aspergillus nidulans).